A 120-amino-acid chain; its full sequence is UPF0102 protein Pfl01_4685 (120 aa).

This sequence belongs to the UPF0102 family.

This chain is UPF0102 protein Pfl01_4685, found in Pseudomonas fluorescens (strain Pf0-1).